The following is a 251-amino-acid chain: Triosephosphate isomerase (251 aa).

10–12 (NWK) is a binding site for substrate. Catalysis depends on His-98, which acts as the Electrophile. Catalysis depends on Glu-169, which acts as the Proton acceptor. Substrate-binding positions include Gly-175, Ser-213, and 234–235 (GG).

Belongs to the triosephosphate isomerase family. In terms of assembly, homodimer.

The protein resides in the cytoplasm. The enzyme catalyses D-glyceraldehyde 3-phosphate = dihydroxyacetone phosphate. Its pathway is carbohydrate biosynthesis; gluconeogenesis. The protein operates within carbohydrate degradation; glycolysis; D-glyceraldehyde 3-phosphate from glycerone phosphate: step 1/1. In terms of biological role, involved in the gluconeogenesis. Catalyzes stereospecifically the conversion of dihydroxyacetone phosphate (DHAP) to D-glyceraldehyde-3-phosphate (G3P). In Paracidovorax citrulli (strain AAC00-1) (Acidovorax citrulli), this protein is Triosephosphate isomerase.